The sequence spans 404 residues: Serine/threonine-protein kinase UCN (404 aa).

Residues 22 to 340 (LKVLKLLGKG…AAEIKEHAFF (319 aa)) form the Protein kinase domain. ATP is bound by residues 28 to 36 (LGKGATGTV) and Lys-55. Asp-153 (proton acceptor) is an active-site residue. The interval 185–207 (EFYHLSDPEPDPNPESNLSHNKK) is disordered. An AGC-kinase C-terminal domain is found at 341 to 404 (KGVRWELLTE…CSENNPFVDF (64 aa)).

This sequence belongs to the protein kinase superfamily. AGC Ser/Thr protein kinase family. Expressed in the epidermis and cortex of the transition zone of the root apex and developing flowers. Expressed in rosette leaves, stems and siliques.

The protein localises to the cytoplasm. It is found in the nucleus. The enzyme catalyses L-seryl-[protein] + ATP = O-phospho-L-seryl-[protein] + ADP + H(+). The catalysed reaction is L-threonyl-[protein] + ATP = O-phospho-L-threonyl-[protein] + ADP + H(+). Regulates planar ovule integument development by suppressing aberrantly oriented growth. Maintains planar growth of integuments by repressing the developmental regulator and transcription factor KAN4 which is involved in the control of early integument growth and polarity. Restricts growth in stamen filaments, petals, and cotyledons. This Arabidopsis thaliana (Mouse-ear cress) protein is Serine/threonine-protein kinase UCN.